The primary structure comprises 497 residues: Dihydrolipoyl dehydrogenase (497 aa).

FAD contacts are provided by residues 60–69, lysine 78, glycine 142, and 170–172; these read EKEPSLGGTC and TGS. An intrachain disulfide couples cysteine 69 to cysteine 74. Residues 207 to 214, glutamate 230, valine 264, and glycine 302 contribute to the NAD(+) site; that span reads GAGVIGLE. FAD-binding positions include aspartate 343 and 349-352; that span reads MLAH. The active-site Proton acceptor is histidine 475.

It belongs to the class-I pyridine nucleotide-disulfide oxidoreductase family. As to quaternary structure, homodimer. FAD is required as a cofactor.

Its subcellular location is the cytoplasm. The catalysed reaction is N(6)-[(R)-dihydrolipoyl]-L-lysyl-[protein] + NAD(+) = N(6)-[(R)-lipoyl]-L-lysyl-[protein] + NADH + H(+). In Manduca sexta (Tobacco hawkmoth), this protein is Dihydrolipoyl dehydrogenase.